Consider the following 75-residue polypeptide: MIKIRLKRYGKKNRPTYRIVLIESQKPRDSKTIEELGHYDPLLKQANFKFDEIMKRVGQGARLTSRVRYILKQFS.

It belongs to the bacterial ribosomal protein bS16 family.

It localises to the plastid. It is found in the chloroplast. In Cyanidium caldarium (Red alga), this protein is Small ribosomal subunit protein bS16c.